We begin with the raw amino-acid sequence, 122 residues long: Immunoglobulin lambda variable 8-61 (122 aa).

A signal peptide spans 1–24 (MSVPTMAWMMLLLGLLAYGSGVDS). The tract at residues 25 to 49 (QTVVTQEPSFSVSPGGTVTLTCGLS) is framework-1. Residues 25 to 122 (QTVVTQEPSF…YCVLYMGSGI (98 aa)) enclose the Ig-like domain. An intrachain disulfide couples cysteine 46 to cysteine 114. Positions 50-58 (SGSVSTSYY) are complementarity-determining-1. Positions 59–75 (PSWYQQTPGQAPRTLIY) are framework-2. Residues 76 to 78 (STN) form a complementarity-determining-2 region. The segment at 79–114 (TRSSGVPDRFSGSILGNKAALTITGAQADDESDYYC) is framework-3. The tract at residues 115–122 (VLYMGSGI) is complementarity-determining-3.

As to quaternary structure, immunoglobulins are composed of two identical heavy chains and two identical light chains; disulfide-linked.

Its subcellular location is the secreted. The protein localises to the cell membrane. Its function is as follows. V region of the variable domain of immunoglobulin light chains that participates in the antigen recognition. Immunoglobulins, also known as antibodies, are membrane-bound or secreted glycoproteins produced by B lymphocytes. In the recognition phase of humoral immunity, the membrane-bound immunoglobulins serve as receptors which, upon binding of a specific antigen, trigger the clonal expansion and differentiation of B lymphocytes into immunoglobulins-secreting plasma cells. Secreted immunoglobulins mediate the effector phase of humoral immunity, which results in the elimination of bound antigens. The antigen binding site is formed by the variable domain of one heavy chain, together with that of its associated light chain. Thus, each immunoglobulin has two antigen binding sites with remarkable affinity for a particular antigen. The variable domains are assembled by a process called V-(D)-J rearrangement and can then be subjected to somatic hypermutations which, after exposure to antigen and selection, allow affinity maturation for a particular antigen. In Homo sapiens (Human), this protein is Immunoglobulin lambda variable 8-61.